The following is a 218-amino-acid chain: MSAVEWSILPGLSPYRETLEAMENRVAAIRAGEAAEAIWLLEHPPLYTAGTSARPEDLVEPERFPVHVAGRGGQYTYHGPGQRVAYVMLDLDRRGRDVRRFVTALEDWVIATLAEFNVRGERREGRVGVWVVRPDRPAGLDGSPREDKIAAIGVKLRRWVSFHGLSINLEPDLTHFEGIVPCGIREHGVTSLVDLGLPVTMQDLDAALLRTFPQHFPD.

The 187-residue stretch at 32-218 (GEAAEAIWLL…LRTFPQHFPD (187 aa)) folds into the BPL/LPL catalytic domain. Substrate contacts are provided by residues 71–78 (RGGQYTYH), 151–153 (AIG), and 164–166 (GLS). The active-site Acyl-thioester intermediate is the C182.

Belongs to the LipB family.

The protein resides in the cytoplasm. It carries out the reaction octanoyl-[ACP] + L-lysyl-[protein] = N(6)-octanoyl-L-lysyl-[protein] + holo-[ACP] + H(+). The protein operates within protein modification; protein lipoylation via endogenous pathway; protein N(6)-(lipoyl)lysine from octanoyl-[acyl-carrier-protein]: step 1/2. Functionally, catalyzes the transfer of endogenously produced octanoic acid from octanoyl-acyl-carrier-protein onto the lipoyl domains of lipoate-dependent enzymes. Lipoyl-ACP can also act as a substrate although octanoyl-ACP is likely to be the physiological substrate. This chain is Octanoyltransferase, found in Cereibacter sphaeroides (strain ATCC 17029 / ATH 2.4.9) (Rhodobacter sphaeroides).